A 199-amino-acid polypeptide reads, in one-letter code: dITP/XTP pyrophosphatase (199 aa).

8–13 (SGNAGK) lines the substrate pocket. The active-site Proton acceptor is Asp69. Asp69 is a binding site for Mg(2+). Substrate contacts are provided by residues Ser70, 154–157 (FGYN), Lys177, and 182–183 (HR).

The protein belongs to the HAM1 NTPase family. In terms of assembly, homodimer. Mg(2+) serves as cofactor.

The catalysed reaction is XTP + H2O = XMP + diphosphate + H(+). It carries out the reaction dITP + H2O = dIMP + diphosphate + H(+). It catalyses the reaction ITP + H2O = IMP + diphosphate + H(+). Its function is as follows. Pyrophosphatase that catalyzes the hydrolysis of nucleoside triphosphates to their monophosphate derivatives, with a high preference for the non-canonical purine nucleotides XTP (xanthosine triphosphate), dITP (deoxyinosine triphosphate) and ITP. Seems to function as a house-cleaning enzyme that removes non-canonical purine nucleotides from the nucleotide pool, thus preventing their incorporation into DNA/RNA and avoiding chromosomal lesions. The polypeptide is dITP/XTP pyrophosphatase (Xylella fastidiosa (strain Temecula1 / ATCC 700964)).